Here is a 473-residue protein sequence, read N- to C-terminus: High-affinity proline transporter PutP (473 aa).

A run of 12 helical transmembrane segments spans residues 32–52 (LSAG…GAMF), 56–76 (LSGA…WLYV), 114–134 (IVIL…GGVL), 146–166 (GLWI…FLAV), 171–191 (FVQG…TFFH), 218–238 (VLGI…PHII), 256–276 (IGMG…LGGI), 299–319 (ILFH…AIMS), 350–370 (LVFL…VLAW), 376–396 (ILGL…PVVL), 408–428 (GALA…NAGL), and 431–451 (FLYE…FVSI).

Belongs to the sodium:solute symporter (SSF) (TC 2.A.21) family.

Its subcellular location is the cell membrane. It carries out the reaction L-proline(in) + Na(+)(in) = L-proline(out) + Na(+)(out). Catalyzes the high-affinity uptake of extracellular proline. Important for the use of proline as a sole carbon and energy source or a sole nitrogen source. The polypeptide is High-affinity proline transporter PutP (Bacillus subtilis (strain 168)).